Reading from the N-terminus, the 1152-residue chain is P3N-PIPO polyprotein (1152 aa).

One can recognise a Peptidase S30 domain in the interval 292-437; the sequence is VMNQQTLTAL…HTLTHRMVQY (146 aa). Residues His-345, Asp-354, and Ser-388 each act as for P1 proteinase activity in the active site. Positions 489 to 492 match the Involved in interaction with stylet and aphid transmission motif; the sequence is KITC. The Involved in virions binding and aphid transmission motif lies at 747–749; sequence PTK. Residues 773–895 form the Peptidase C6 domain; that stretch reads MFVAKDGYCY…ESEMQHYRVG (123 aa). Active-site for helper component proteinase activity residues include Cys-781 and His-854.

Belongs to the potyviridae P3N-PIPO polyprotein family. Interacts (via PIPO domain) with host PCaP1 protein; this interaction may help to anchor the movement complex to the plasma membrane from which the complex could move to the plasmodesmata. In terms of processing, potyviral RNA is expressed as two polyproteins which undergo post-translational proteolytic processing. Genome polyprotein is processed by NIa-pro, P1 and HC-pro proteinases resulting in the production of at least ten individual proteins. P3N-PIPO is cleaved by P1 and HC-pro proteinases resulting in the production of three individual proteins. The P1 proteinase and the HC-pro cleave only their respective C-termini autocatalytically.

Its subcellular location is the host cell junction. The protein resides in the host plasmodesma. It carries out the reaction Hydrolyzes a Gly-|-Gly bond at its own C-terminus, commonly in the sequence -Tyr-Xaa-Val-Gly-|-Gly, in the processing of the potyviral polyprotein.. In terms of biological role, required for aphid transmission and also has proteolytic activity. Only cleaves a Gly-Gly dipeptide at its own C-terminus. Interacts with virions and aphid stylets. Acts as a suppressor of RNA-mediated gene silencing, also known as post-transcriptional gene silencing (PTGS), a mechanism of plant viral defense that limits the accumulation of viral RNAs. May have RNA-binding activity. Allows efficient cell to cell propagation, by bypassing the host cell wall barrier. Transports viral genome to neighboring plant cells directly through plasmosdesmata, without any budding. The polypeptide is P3N-PIPO polyprotein (Carthamus tinctorius (Safflower)).